A 484-amino-acid chain; its full sequence is Poly(A) RNA polymerase GLD2 (484 aa).

Serine 62 and serine 69 each carry phosphoserine. Residues 76–92 (KRISDEKAFRLDGKRQR) carry the Nuclear localization signal motif. Serine 95 bears the Phosphoserine mark. Residues aspartate 213 and aspartate 215 each contribute to the Mg(2+) site. Residues 386 to 440 (SLGDLLLGFLKYYATEFDWNTQMISVREAKAIPRPDDMEWRNKYICVEEPFDGTN) enclose the PAP-associated domain.

It belongs to the DNA polymerase type-B-like family. GLD2 subfamily. In terms of assembly, interacts with CPEB1, CPEB2, CPSF1 and PABPC1. Interacts with QKI isoform QKI7; promoting recruitment to miRNA miR-122 and miR-122 stabilization. Mg(2+) serves as cofactor. Mn(2+) is required as a cofactor.

It is found in the cytoplasm. It localises to the nucleus. It catalyses the reaction RNA(n) + ATP = RNA(n)-3'-adenine ribonucleotide + diphosphate. In terms of biological role, cytoplasmic poly(A) RNA polymerase that adds successive AMP monomers to the 3'-end of specific RNAs, forming a poly(A) tail. In contrast to the canonical nuclear poly(A) RNA polymerase, it only adds poly(A) to selected cytoplasmic mRNAs. Does not play a role in replication-dependent histone mRNA degradation. Adds a single nucleotide to the 3' end of specific miRNAs, monoadenylation stabilizes and prolongs the activity of some but not all miRNAs. The chain is Poly(A) RNA polymerase GLD2 from Rattus norvegicus (Rat).